Reading from the N-terminus, the 642-residue chain is Frizzled and smoothened-like protein B (642 aa).

Positions 1-26 are cleaved as a signal peptide; sequence MFNKNNNNNKIIIILKLFLIILIVNN. The Extracellular segment spans residues 27 to 264; it reads NNNIKTFGLN…KWHQMYNMSK (238 aa). The region spanning 47 to 197 is the FZ domain; sequence DPTATCSNYI…GFFPVPCSDP (151 aa). Disulfide bonds link Cys-52-Cys-123, Cys-65-Cys-116, and Cys-143-Cys-194. Residues Asn-80, Asn-153, Asn-162, Asn-177, Asn-203, Asn-222, and Asn-261 are each glycosylated (N-linked (GlcNAc...) asparagine). A helical transmembrane segment spans residues 265 to 285; the sequence is ILSTISFVCSIYNVLTFGILN. The Cytoplasmic portion of the chain corresponds to 286–294; the sequence is HRRSKYNYC. The chain crosses the membrane as a helical span at residues 295-315; it reads ITFFSASVIIITMMDIVTYGI. At 316-344 the chain is on the extracellular side; that stretch reads GYEKLLCPEPGRFAVQSDVSCGATGALFH. The helical transmembrane segment at 345 to 365 threads the bilayer; that stretch reads IGITNGVFWWTTMSICLFAVV. Over 366–375 the chain is Cytoplasmic; it reads KRIKLFDFRY. A helical transmembrane segment spans residues 376–398; the sequence is FIIFNTTASLISVIIPLAGNAFM. At 399 to 416 the chain is on the extracellular side; it reads AGTGSLACWIRKTWYVNS. A helical membrane pass occupies residues 417–437; the sequence is VFWIPCGIALTIGSVCIILVI. The Cytoplasmic portion of the chain corresponds to 438 to 460; it reads YEIYKITKNVSTKDNRMILLQIK. Residues 461–481 form a helical membrane-spanning segment; it reads PFLCVTLVGGSFYYLFIFNFD. The N-linked (GlcNAc...) asparagine glycan is linked to Asn-482. The Extracellular portion of the chain corresponds to 482–514; sequence NESHSKEYKEKVVDYVMCLLSDTGKECLMAGPN. Residues 515-535 form a helical membrane-spanning segment; the sequence is YVAYFVFYFFIRLFGITFFCI. Residues 536-642 are Cytoplasmic-facing; that stretch reads YGTSQNARDI…INSASNTSSD (107 aa). A disordered region spans residues 578-642; sequence GTNPTSNSKN…INSASNTSSD (65 aa). Low complexity predominate over residues 583 to 598; the sequence is SNSKNSKNNQNNQNNN. The stretch at 584–611 forms a coiled coil; it reads NSKNSKNNQNNQNNNSRKEFESKNIELE. Positions 599–609 are enriched in basic and acidic residues; sequence SRKEFESKNIE. Composition is skewed to polar residues over residues 614–623 and 632–642; these read ESISKGQTTR and NINSASNTSSD.

This sequence belongs to the G-protein coupled receptor Fz/Smo family.

Its subcellular location is the membrane. The chain is Frizzled and smoothened-like protein B (fslB) from Dictyostelium discoideum (Social amoeba).